A 189-amino-acid chain; its full sequence is GTPase NRas (189 aa).

GTP-binding positions include 10-18 (GAGGVGKSA) and 29-30 (VD). The short motif at 32-40 (YDPTIEDSY) is the Effector region element. Residue 57 to 61 (DTAGQ) participates in GTP binding. Serine 89 is subject to Phosphoserine. GTP is bound at residue 116–119 (NKCD). Positions 166-185 (YRMKKLNSSDDGTQGCMGLP) are hypervariable region. A Glycyl lysine isopeptide (Lys-Gly) (interchain with G-Cter in ubiquitin) cross-link involves residue lysine 170. Cysteine 181 is lipidated: S-palmitoyl cysteine. Cysteine 186 carries the S-farnesyl cysteine lipid modification. The propeptide at 187–189 (VVM) is removed in mature form.

Belongs to the small GTPase superfamily. Ras family. Interacts (active GTP-bound form preferentially) with RGS14. Interacts (active GTP-bound form) with RASSF7. Interacts (active GTP-bound form) with both SHOC2 and PP1c (all isoforms) to form a tertiary complex; SHOC2 and PP1c preferably bind M-Ras/MRAS, but they also bind K-Ras/KRAS, N-Ras/NRAS and H-Ras/HRAS. Palmitoylated by the ZDHHC9-GOLGA7 complex. Depalmitoylated by ABHD17A, ABHD17B and ABHD17C. A continuous cycle of de- and re-palmitoylation regulates rapid exchange between plasma membrane and Golgi. In terms of processing, acetylation at Lys-104 prevents interaction with guanine nucleotide exchange factors (GEFs). Post-translationally, ubiquitinated by the BCR(LZTR1) E3 ubiquitin ligase complex at Lys-170 in a non-degradative manner, leading to inhibit Ras signaling by decreasing Ras association with membranes. Phosphorylation at Ser-89 enhances NRAS association with its downstream effectors.

Its subcellular location is the cell membrane. The protein localises to the golgi apparatus membrane. It carries out the reaction GTP + H2O = GDP + phosphate + H(+). With respect to regulation, alternates between an inactive form bound to GDP and an active form bound to GTP. Activated by a guanine nucleotide-exchange factor (GEF) and inactivated by a GTPase-activating protein (GAP). Functionally, ras proteins bind GDP/GTP and possess intrinsic GTPase activity. The sequence is that of GTPase NRas (NRAS) from Pongo abelii (Sumatran orangutan).